A 1030-amino-acid polypeptide reads, in one-letter code: Pro-apoptotic serine protease NMA111 (1030 aa).

The tract at residues 1–48 is disordered; it reads MNGTTSPIAARSKRKEPPHTVDGRHPKHHRTNGEVAPAADNTPDNQDE. Basic and acidic residues predominate over residues 15–24; sequence KEPPHTVDGR. Residues 89-279 are serine protease; it reads VVSIRFCQTC…LPLDRPLRAL (191 aa). Residues His127, Asp158, and Ser240 each act as charge relay system in the active site. 2 PDZ domains span residues 312–384 and 880–960; these read PEWE…LRGG and AVSF…LRAM.

This sequence belongs to the peptidase S1C family.

The protein resides in the nucleus. Functionally, nuclear serine protease which mediates apoptosis. This chain is Pro-apoptotic serine protease NMA111 (NMA111), found in Chaetomium globosum (strain ATCC 6205 / CBS 148.51 / DSM 1962 / NBRC 6347 / NRRL 1970) (Soil fungus).